The following is a 287-amino-acid chain: Nucleoid occlusion protein (287 aa).

A DNA-binding region (H-T-H motif) is located at residues 146-165 (EALAQRVGKSQSAIANKMRL).

This sequence belongs to the ParB family.

It is found in the cytoplasm. The protein localises to the nucleoid. Functionally, effects nucleoid occlusion by binding relatively nonspecifically to DNA and preventing the assembly of the division machinery in the vicinity of the nucleoid, especially under conditions that disturb the cell cycle. It helps to coordinate cell division and chromosome segregation by preventing the formation of the Z ring through the nucleoid, which would cause chromosome breakage. The polypeptide is Nucleoid occlusion protein (Listeria monocytogenes serotype 4a (strain HCC23)).